A 161-amino-acid polypeptide reads, in one-letter code: NADH-quinone oxidoreductase subunit I (161 aa).

4Fe-4S ferredoxin-type domains follow at residues 52–82 and 92–121; these read LRRY…IESE and KRYD…ETRV. Residues cysteine 62, cysteine 65, cysteine 68, cysteine 72, cysteine 101, cysteine 104, cysteine 107, and cysteine 111 each contribute to the [4Fe-4S] cluster site.

This sequence belongs to the complex I 23 kDa subunit family. In terms of assembly, NDH-1 is composed of 14 different subunits. Subunits NuoA, H, J, K, L, M, N constitute the membrane sector of the complex. It depends on [4Fe-4S] cluster as a cofactor.

The protein resides in the cell inner membrane. It catalyses the reaction a quinone + NADH + 5 H(+)(in) = a quinol + NAD(+) + 4 H(+)(out). NDH-1 shuttles electrons from NADH, via FMN and iron-sulfur (Fe-S) centers, to quinones in the respiratory chain. The immediate electron acceptor for the enzyme in this species is believed to be ubiquinone. Couples the redox reaction to proton translocation (for every two electrons transferred, four hydrogen ions are translocated across the cytoplasmic membrane), and thus conserves the redox energy in a proton gradient. This Aromatoleum aromaticum (strain DSM 19018 / LMG 30748 / EbN1) (Azoarcus sp. (strain EbN1)) protein is NADH-quinone oxidoreductase subunit I.